We begin with the raw amino-acid sequence, 81 residues long: MKTLLLTLVVVTIVCLDLGYTLKCNKLVPLFYKTCPAGKNLCYKMFMVATPKVPVKRGCIDVCPKNSALVKYVCCNTDRCN.

An N-terminal signal peptide occupies residues 1 to 21 (MKTLLLTLVVVTIVCLDLGYT). 4 disulfides stabilise this stretch: Cys24/Cys42, Cys35/Cys59, Cys63/Cys74, and Cys75/Cys80.

It belongs to the three-finger toxin family. Short-chain subfamily. Type IA cytotoxin sub-subfamily. In terms of assembly, monomer in solution; Homodimer and oligomer in the presence of negatively charged lipids forming a pore with a size ranging between 20 and 30 Angstroms. Expressed by the venom gland.

Its subcellular location is the secreted. It is found in the target cell membrane. Functionally, shows cytolytic activity on many different cells by forming pore in lipid membranes. In vivo, increases heart rate or kills the animal by cardiac arrest. In addition, it binds to heparin with high affinity, interacts with Kv channel-interacting protein 1 (KCNIP1) in a calcium-independent manner, and binds to integrin alpha-V/beta-3 (ITGAV/ITGB3) with moderate affinity. In Naja atra (Chinese cobra), this protein is Cytotoxin 3b.